A 642-amino-acid chain; its full sequence is Threonine--tRNA ligase (642 aa).

One can recognise a TGS domain in the interval 1-61 (MPIITLPDGS…EEDASLEIIT (61 aa)). The segment at 244-535 (DHRKIGKQLD…LIEEYAGFFP (292 aa)) is catalytic. Zn(2+)-binding residues include Cys-335, His-386, and His-512.

This sequence belongs to the class-II aminoacyl-tRNA synthetase family. Homodimer. Zn(2+) serves as cofactor.

The protein resides in the cytoplasm. The catalysed reaction is tRNA(Thr) + L-threonine + ATP = L-threonyl-tRNA(Thr) + AMP + diphosphate + H(+). Its function is as follows. Catalyzes the attachment of threonine to tRNA(Thr) in a two-step reaction: L-threonine is first activated by ATP to form Thr-AMP and then transferred to the acceptor end of tRNA(Thr). Also edits incorrectly charged L-seryl-tRNA(Thr). This chain is Threonine--tRNA ligase, found in Vibrio vulnificus (strain CMCP6).